The following is a 78-amino-acid chain: Disintegrin DisBa-01 (78 aa).

A Disintegrin domain is found at 1-78 (GNELLEAGEE…AGCPRNPFHA (78 aa)). Cystine bridges form between Cys11–Cys26, Cys13–Cys21, Cys20–Cys43, Cys34–Cys40, Cys39–Cys64, and Cys52–Cys71. Positions 56-58 (RGD) match the Cell attachment site motif.

This sequence belongs to the venom metalloproteinase (M12B) family. P-II subfamily. P-IIa sub-subfamily. Monomer. Expressed by the venom gland.

Its subcellular location is the secreted. In terms of biological role, this recombinant disintegrin antagonizes integrins alpha-IIb/beta-3 (ITGA2B/ITGB3) and alpha-V/beta-3 (ITGAV/ITGB3). On ITGA2B/ITGB3, it interferes with the outside/-in phosphorylation of the focal adhesion kinase (PTK2 / FAK) downstream of the integrin. It strongly inhibits platelet aggregation induced by ADP, thrombin, and collagen, abolishes and reverses dynamic platelet recruitment to immobilized fibrinogen. In vivo, it induces a dramatic increase in the tail bleeding time, and has a strong antithrombotic activity. On ITGAV/ITGB3, it inhibits the adhesion of ITGAV/ITGB3-expressing human microvascular endothelial cell line and murine melanoma cell line to vitronectin (IC(50) are 555 nM and 225 nM, respectively), and transiently inhibits their proliferation without direct cell toxicity. In vivo, it potently inhibits angiogenesis and metastasis, probably due to its capability to strongly inhibit the expression of VEGF and its receptors in endothelial cells. It also inhibits tumor cell migration in vitro. The chain is Disintegrin DisBa-01 from Bothrops alternatus (Urutu).